Consider the following 360-residue polypeptide: Meiotic drive suppressor wtf13 (360 aa).

Composition is skewed to polar residues over residues 1 to 10 (MKNNYTSLKS) and 58 to 70 (DSST…TNPN). Disordered stretches follow at residues 1 to 20 (MKNN…ELKT) and 37 to 75 (EEEG…ERRQ). The next 8 membrane-spanning stretches (helical) occupy residues 90–110 (LLIS…CVNP), 120–140 (AFSV…FCFF), 150–170 (CIKV…ISLA), 186–206 (DLVV…FGCV), 222–242 (SSIS…IWTL), 246–266 (LFGL…TKGL), 276–296 (ATGY…LFFY), and 310–330 (FIGN…RGIA).

The protein belongs to the WTF family. As to quaternary structure, homomer. Interacts with other proteins that exhibit high sequence similarity.

It is found in the spore membrane. The protein resides in the vacuole membrane. Its function is as follows. Acts as a suppressor component of the dual wtf meiotic drive system, and can suppress but not confer meiotic drive by compatible poisons. Wtf meiotic drive systems promote unequal transmission of alleles from the parental zygote to progeny spores by encoding a poison and an antidote from the same locus; the poison is trans-acting and forms toxic aggregates in all spores within an ascus, wherease the antidote is spore-specific and targets aggregates for degradation by the vacuole. Meiotic drive by wtf systems therefore lead to poisoning of all progeny that do not inherit the dual poison/antidote allele, or express a compatible antidote. The protein is Meiotic drive suppressor wtf13 of Schizosaccharomyces kambucha (Fission yeast).